The chain runs to 441 residues: Ribosomal protein uS12 methylthiotransferase RimO (441 aa).

The MTTase N-terminal domain maps to 8–118 (PKIGFVSLGC…VLQHVHHYVP (111 aa)). The [4Fe-4S] cluster site is built by Cys17, Cys53, Cys82, Cys150, Cys154, and Cys157. Positions 136–373 (LTPRHYAYLK…MQLQQQISAE (238 aa)) constitute a Radical SAM core domain. Residues 376–441 (QEKVGREILV…DEYDLWGSRV (66 aa)) form the TRAM domain.

This sequence belongs to the methylthiotransferase family. RimO subfamily. [4Fe-4S] cluster is required as a cofactor.

The protein resides in the cytoplasm. The enzyme catalyses L-aspartate(89)-[ribosomal protein uS12]-hydrogen + (sulfur carrier)-SH + AH2 + 2 S-adenosyl-L-methionine = 3-methylsulfanyl-L-aspartate(89)-[ribosomal protein uS12]-hydrogen + (sulfur carrier)-H + 5'-deoxyadenosine + L-methionine + A + S-adenosyl-L-homocysteine + 2 H(+). In terms of biological role, catalyzes the methylthiolation of an aspartic acid residue of ribosomal protein uS12. This is Ribosomal protein uS12 methylthiotransferase RimO from Salmonella agona (strain SL483).